Here is a 283-residue protein sequence, read N- to C-terminus: Orotidine 5'-phosphate decarboxylase (283 aa).

Lys97 functions as the Proton donor in the catalytic mechanism.

This sequence belongs to the OMP decarboxylase family. Type 2 subfamily.

It catalyses the reaction orotidine 5'-phosphate + H(+) = UMP + CO2. The protein operates within pyrimidine metabolism; UMP biosynthesis via de novo pathway; UMP from orotate: step 2/2. In Clostridium botulinum (strain Kyoto / Type A2), this protein is Orotidine 5'-phosphate decarboxylase.